Consider the following 358-residue polypeptide: Type II methyltransferase M.HpaII (358 aa).

Residues 32–356 (FTFIDLFAGI…KKILEKLGNL (325 aa)) enclose the SAM-dependent MTase C5-type domain. Residue Cys-103 is part of the active site.

This sequence belongs to the class I-like SAM-binding methyltransferase superfamily. C5-methyltransferase family. Monomer.

It catalyses the reaction a 2'-deoxycytidine in DNA + S-adenosyl-L-methionine = a 5-methyl-2'-deoxycytidine in DNA + S-adenosyl-L-homocysteine + H(+). A methylase that recognizes the double-stranded sequence 5'-CCGG-3', methylates C-2 on both strands, and protects the DNA from cleavage by the HpaII endonuclease. This Haemophilus parainfluenzae protein is Type II methyltransferase M.HpaII.